The following is a 718-amino-acid chain: MARAGGGGAAAPERAGGAARPEPWELSLEEVLKVYEQPINEEQAWAVCFQGCRGLRGEPGGVRRIRDTADILLRRDGSVGARLEPEPTTMVVPPASSEAQMVQSLGFAIYRALDWGLDENEERELSPQLERLIDLMANSDCEDSSCGAADEGYVGPEEEEEAEGGPRAVRTFAQAMRLCALRLTDPHGAQAHYQAVCRALFVETLELRAFLARVREAKEMLKKLGEEEPREKPLAELDHLGHTDWARLWVQLMRELRHGVKLKKVQEKEFNPLPTEFQLTPFEMLMQDIRARNYKLRKVMVDGDIPPRVKKDAHELILDFIRSRPPLKQVSERQLRPVPQKQRTLHEKILEEIKQERRLRPVGAQHLGGRGFGSLPCILNACSGDIKSTSCINLSVTDTGSGSQRPRPRVLLKAPTLAEMEEMNTSEEEESPCGEVALKRDRSFSEHDLAQLRSEMASGLQSAAQPPGGTEPPRARAGSMHSWRPSSRDQGFCPVSGQSQPLPSSALPSSLSSVDGPEAASPDTRHLWLEFSHPVESLALTVEEVVDVRRVLVKAEMERFLQDKELFSSLKRGKICCCCRAKFPLFSWPPTCLFCKRAVCTSCSVKMKMPSKKYGHIPVYTLGFESLQRVPTTKATPTLRRDAFQSLQGPKWRSVEEEFPHIYAHGCVLKDVCSDCTSFVADVVCSSRKSVDVLNATPRRSRQTQSLYIPNTRTLNFQ.

2 disordered regions span residues 1–22 (MARA…ARPE) and 143–166 (DSSC…EGGP). Residues 10–21 (AAPERAGGAARP) are compositionally biased toward low complexity. Residues 26-207 (LSLEEVLKVY…RALFVETLEL (182 aa)) form the KIND domain. WH2 domains lie at 251 to 265 (QLMR…LKKV), 281 to 299 (PFEM…LRKV), and 345 to 362 (LHEK…LRPV). S374 is subject to Phosphoserine. The segment at 397–434 (TDTGSGSQRPRPRVLLKAPTLAEMEEMNTSEEEESPCG) is disordered. The span at 419-432 (EMEEMNTSEEEESP) shows a compositional bias: acidic residues. S443, S445, and S479 each carry phosphoserine. The segment at 456–518 (MASGLQSAAQ…SSLSSVDGPE (63 aa)) is disordered. Positions 496 to 513 (SGQSQPLPSSALPSSLSS) are enriched in low complexity. The interval 538–558 (LALTVEEVVDVRRVLVKAEME) is spir-box.

The protein belongs to the spire family. Detected in oocytes.

It is found in the cytoplasm. The protein localises to the cytoskeleton. Its subcellular location is the cytosol. It localises to the cell membrane. The protein resides in the cytoplasmic vesicle membrane. Its function is as follows. Acts as an actin nucleation factor, remains associated with the slow-growing pointed end of the new filament. Involved in intracellular vesicle transport along actin fibers, providing a novel link between actin cytoskeleton dynamics and intracellular transport. Required for asymmetric spindle positioning and asymmetric cell division during oocyte meiosis. Required for normal formation of the cleavage furrow and for polar body extrusion during female germ cell meiosis. Also acts in the nucleus: together with SPIRE1 and SPIRE2, promotes assembly of nuclear actin filaments in response to DNA damage in order to facilitate movement of chromatin and repair factors after DNA damage. In Mus musculus (Mouse), this protein is Protein spire homolog 2 (Spire2).